Here is a 391-residue protein sequence, read N- to C-terminus: Chalcone synthase (391 aa).

Residue Cys-164 is part of the active site.

This sequence belongs to the thiolase-like superfamily. Chalcone/stilbene synthases family.

It catalyses the reaction (E)-4-coumaroyl-CoA + 3 malonyl-CoA + 3 H(+) = 2',4,4',6'-tetrahydroxychalcone + 3 CO2 + 4 CoA. It functions in the pathway secondary metabolite biosynthesis; flavonoid biosynthesis. Functionally, the primary product of this enzyme is 4,2',4',6'-tetrahydroxychalcone (also termed naringenin-chalcone or chalcone) which can under specific conditions spontaneously isomerize into naringenin. The protein is Chalcone synthase (CHS) of Dianthus caryophyllus (Carnation).